The chain runs to 161 residues: Allophycocyanin alpha chain (161 aa).

The residue at position 71 (N71) is an N4-methylasparagine. C81 is a (2R,3E)-phycocyanobilin binding site.

The protein belongs to the phycobiliprotein family. As to quaternary structure, heterodimer of an alpha and a beta chain. Post-translationally, contains one covalently linked phycocyanobilin chromophore.

The protein localises to the plastid. Its subcellular location is the chloroplast thylakoid membrane. Light-harvesting photosynthetic bile pigment-protein from the phycobiliprotein complex. Allophycocyanin has a maximum absorption at approximately 650 nanometers. This Porphyra purpurea (Red seaweed) protein is Allophycocyanin alpha chain (apcA).